The sequence spans 243 residues: MSSIYLGVNIDHVATLRNARGTQYPDPVHAAEIAERAGADGITIHLREDRRHITDRDVRILRETLQTRMNLEMAVTDEMVEIALQTQPEYVCLVPEKREELTTEGGLDVLGQLERVKAATEKLTAAGIKVSLFIDADREQIDAAKACGAPFIELHTGHYSDAKSDVDQQNELKKIAAAAAYAHDLGITVNAGHGLTYHNVAAIAAIPEIYELNIGHAIIGRAVFDGLAKAVADMKAIMVAARR.

Asn-9 contacts 3-amino-2-oxopropyl phosphate. 11-12 (DH) contributes to the 1-deoxy-D-xylulose 5-phosphate binding site. Residue Arg-20 participates in 3-amino-2-oxopropyl phosphate binding. The Proton acceptor role is filled by His-45. 1-deoxy-D-xylulose 5-phosphate contacts are provided by Arg-47 and His-52. Residue Glu-72 is the Proton acceptor of the active site. Residue Thr-102 coordinates 1-deoxy-D-xylulose 5-phosphate. His-193 serves as the catalytic Proton donor. Residues Gly-194 and 215–216 (GH) contribute to the 3-amino-2-oxopropyl phosphate site.

This sequence belongs to the PNP synthase family. As to quaternary structure, homooctamer; tetramer of dimers.

The protein resides in the cytoplasm. It catalyses the reaction 3-amino-2-oxopropyl phosphate + 1-deoxy-D-xylulose 5-phosphate = pyridoxine 5'-phosphate + phosphate + 2 H2O + H(+). The protein operates within cofactor biosynthesis; pyridoxine 5'-phosphate biosynthesis; pyridoxine 5'-phosphate from D-erythrose 4-phosphate: step 5/5. In terms of biological role, catalyzes the complicated ring closure reaction between the two acyclic compounds 1-deoxy-D-xylulose-5-phosphate (DXP) and 3-amino-2-oxopropyl phosphate (1-amino-acetone-3-phosphate or AAP) to form pyridoxine 5'-phosphate (PNP) and inorganic phosphate. The polypeptide is Pyridoxine 5'-phosphate synthase (Vibrio cholerae serotype O1 (strain ATCC 39315 / El Tor Inaba N16961)).